We begin with the raw amino-acid sequence, 206 residues long: Pyridoxine/pyridoxamine 5'-phosphate oxidase (206 aa).

Residues 53-58 (RMVLLK), 68-69 (YT), Lys-75, and Gln-97 each bind FMN. Substrate is bound at residue Lys-58. Residues Tyr-115, Arg-119, and Ser-123 each contribute to the substrate site. Residues 132–133 (QS) and Trp-177 each bind FMN. A substrate-binding site is contributed by 183–185 (RLH). Arg-187 contacts FMN.

It belongs to the pyridoxamine 5'-phosphate oxidase family. Homodimer. It depends on FMN as a cofactor.

It carries out the reaction pyridoxamine 5'-phosphate + O2 + H2O = pyridoxal 5'-phosphate + H2O2 + NH4(+). It catalyses the reaction pyridoxine 5'-phosphate + O2 = pyridoxal 5'-phosphate + H2O2. The protein operates within cofactor metabolism; pyridoxal 5'-phosphate salvage; pyridoxal 5'-phosphate from pyridoxamine 5'-phosphate: step 1/1. It functions in the pathway cofactor metabolism; pyridoxal 5'-phosphate salvage; pyridoxal 5'-phosphate from pyridoxine 5'-phosphate: step 1/1. In terms of biological role, catalyzes the oxidation of either pyridoxine 5'-phosphate (PNP) or pyridoxamine 5'-phosphate (PMP) into pyridoxal 5'-phosphate (PLP). The protein is Pyridoxine/pyridoxamine 5'-phosphate oxidase of Rhizobium johnstonii (strain DSM 114642 / LMG 32736 / 3841) (Rhizobium leguminosarum bv. viciae).